A 951-amino-acid chain; its full sequence is Valine--tRNA ligase (951 aa).

Residues 42–52 carry the 'HIGH' region motif; the sequence is PNVTGSLHMGH. Positions 554 to 558 match the 'KMSKS' region motif; the sequence is KMSKS. Lys557 is an ATP binding site. Positions 880–944 form a coiled coil; it reads AGLINKEDEL…AEAKAKLIEQ (65 aa).

The protein belongs to the class-I aminoacyl-tRNA synthetase family. ValS type 1 subfamily. As to quaternary structure, monomer.

It localises to the cytoplasm. The enzyme catalyses tRNA(Val) + L-valine + ATP = L-valyl-tRNA(Val) + AMP + diphosphate. Functionally, catalyzes the attachment of valine to tRNA(Val). As ValRS can inadvertently accommodate and process structurally similar amino acids such as threonine, to avoid such errors, it has a 'posttransfer' editing activity that hydrolyzes mischarged Thr-tRNA(Val) in a tRNA-dependent manner. The chain is Valine--tRNA ligase from Shigella flexneri.